Reading from the N-terminus, the 312-residue chain is Regulation of nuclear pre-mRNA domain-containing protein 1A (312 aa).

The residue at position 2 (Ser2) is an N-acetylserine. The 132-residue stretch at 2–133 (SAFSEAALEK…QLKQALYGDK (132 aa)) folds into the CID domain. Residues Ser153, Ser156, and Ser285 each carry the phosphoserine modification. The stretch at 244–286 (LADFLRCQKEALAEKEHKLEEYKRKLARVSLVRKELRSRIQSL) forms a coiled coil.

The protein belongs to the UPF0400 (RTT103) family. In terms of assembly, may form a heterodimer with RPRD1B. Associates with the RNA polymerase II subunit POLR2A (via CTD phosphorylated at 'Ser-2' and 'Ser-7' of the heptad repeats).

The protein resides in the nucleus. Functionally, interacts with phosphorylated C-terminal heptapeptide repeat domain (CTD) of the largest RNA polymerase II subunit POLR2A, and participates in dephosphorylation of the CTD by RPAP2. May act as a negative regulator of cyclin-D1 (CCND1) and cyclin-E (CCNE1) in the cell cycle. In Pongo abelii (Sumatran orangutan), this protein is Regulation of nuclear pre-mRNA domain-containing protein 1A (RPRD1A).